The primary structure comprises 451 residues: Bifunctional protein GlmU (451 aa).

A pyrophosphorylase region spans residues 1–232 (MTARSSLTIV…EDEVRGINTK (232 aa)). UDP-N-acetyl-alpha-D-glucosamine contacts are provided by residues 11–14 (LAAG), K25, Q78, and 83–84 (GT). Residue D108 coordinates Mg(2+). UDP-N-acetyl-alpha-D-glucosamine-binding residues include G144, E158, N173, and N230. N230 contributes to the Mg(2+) binding site. Residues 233-253 (AQLAEAESVMQARLRKAAMEA) form a linker region. Positions 254–451 (GVTLIAPETV…MKTRGKKPEK (198 aa)) are N-acetyltransferase. UDP-N-acetyl-alpha-D-glucosamine contacts are provided by R319 and K337. H349 acts as the Proton acceptor in catalysis. Positions 352 and 363 each coordinate UDP-N-acetyl-alpha-D-glucosamine. Acetyl-CoA-binding positions include A366, 372–373 (NY), S409, and R426.

The protein in the N-terminal section; belongs to the N-acetylglucosamine-1-phosphate uridyltransferase family. This sequence in the C-terminal section; belongs to the transferase hexapeptide repeat family. Homotrimer. Mg(2+) is required as a cofactor.

The protein localises to the cytoplasm. The enzyme catalyses alpha-D-glucosamine 1-phosphate + acetyl-CoA = N-acetyl-alpha-D-glucosamine 1-phosphate + CoA + H(+). It catalyses the reaction N-acetyl-alpha-D-glucosamine 1-phosphate + UTP + H(+) = UDP-N-acetyl-alpha-D-glucosamine + diphosphate. It functions in the pathway nucleotide-sugar biosynthesis; UDP-N-acetyl-alpha-D-glucosamine biosynthesis; N-acetyl-alpha-D-glucosamine 1-phosphate from alpha-D-glucosamine 6-phosphate (route II): step 2/2. It participates in nucleotide-sugar biosynthesis; UDP-N-acetyl-alpha-D-glucosamine biosynthesis; UDP-N-acetyl-alpha-D-glucosamine from N-acetyl-alpha-D-glucosamine 1-phosphate: step 1/1. Its pathway is bacterial outer membrane biogenesis; LPS lipid A biosynthesis. Functionally, catalyzes the last two sequential reactions in the de novo biosynthetic pathway for UDP-N-acetylglucosamine (UDP-GlcNAc). The C-terminal domain catalyzes the transfer of acetyl group from acetyl coenzyme A to glucosamine-1-phosphate (GlcN-1-P) to produce N-acetylglucosamine-1-phosphate (GlcNAc-1-P), which is converted into UDP-GlcNAc by the transfer of uridine 5-monophosphate (from uridine 5-triphosphate), a reaction catalyzed by the N-terminal domain. In Bradyrhizobium diazoefficiens (strain JCM 10833 / BCRC 13528 / IAM 13628 / NBRC 14792 / USDA 110), this protein is Bifunctional protein GlmU.